Consider the following 399-residue polypeptide: Acetate kinase (399 aa).

Asparagine 7 lines the Mg(2+) pocket. An ATP-binding site is contributed by lysine 14. Arginine 91 serves as a coordination point for substrate. Residue aspartate 148 is the Proton donor/acceptor of the active site. Residues 208–212 (HLGNG), 283–285 (DFR), and 331–335 (GIGEN) contribute to the ATP site. Mg(2+) is bound at residue glutamate 384.

It belongs to the acetokinase family. As to quaternary structure, homodimer. It depends on Mg(2+) as a cofactor. Requires Mn(2+) as cofactor.

It is found in the cytoplasm. The enzyme catalyses acetate + ATP = acetyl phosphate + ADP. The protein operates within metabolic intermediate biosynthesis; acetyl-CoA biosynthesis; acetyl-CoA from acetate: step 1/2. Catalyzes the formation of acetyl phosphate from acetate and ATP. Can also catalyze the reverse reaction. This is Acetate kinase from Acetivibrio thermocellus (strain ATCC 27405 / DSM 1237 / JCM 9322 / NBRC 103400 / NCIMB 10682 / NRRL B-4536 / VPI 7372) (Clostridium thermocellum).